A 217-amino-acid polypeptide reads, in one-letter code: Probable GTP-binding protein EngB (217 aa).

Residues 33–217 (GPTEIAFAGR…RAAIELAVAR (185 aa)) form the EngB-type G domain. GTP contacts are provided by residues 41–48 (GRSNVGKS), 68–72 (GRTQE), 95–98 (DMPG), 162–165 (TKTD), and 196–198 (TSS). Residues Ser48 and Thr70 each coordinate Mg(2+).

This sequence belongs to the TRAFAC class TrmE-Era-EngA-EngB-Septin-like GTPase superfamily. EngB GTPase family. It depends on Mg(2+) as a cofactor.

Its function is as follows. Necessary for normal cell division and for the maintenance of normal septation. The polypeptide is Probable GTP-binding protein EngB (Sinorhizobium medicae (strain WSM419) (Ensifer medicae)).